We begin with the raw amino-acid sequence, 129 residues long: Small ribosomal subunit protein uS11 (129 aa).

The protein belongs to the universal ribosomal protein uS11 family. Part of the 30S ribosomal subunit. Interacts with proteins S7 and S18. Binds to IF-3.

Its function is as follows. Located on the platform of the 30S subunit, it bridges several disparate RNA helices of the 16S rRNA. Forms part of the Shine-Dalgarno cleft in the 70S ribosome. The chain is Small ribosomal subunit protein uS11 from Staphylococcus saprophyticus subsp. saprophyticus (strain ATCC 15305 / DSM 20229 / NCIMB 8711 / NCTC 7292 / S-41).